The following is a 995-amino-acid chain: Polynucleotide 5'-hydroxyl-kinase NOL9 (995 aa).

Disordered stretches follow at residues 18–173 (EQRE…SSMK) and 271–359 (IKVF…YEPP). Low complexity-rich tracts occupy residues 75–94 (TAGA…SSPS) and 110–129 (VNKS…KSAK). Positions 279–354 (EETDSDEDDI…DIFDTDDLDS (76 aa)) are enriched in acidic residues. Position 639-646 (639-646 (GGKGVGKS)) interacts with ATP.

The protein belongs to the Clp1 family. NOL9/GRC3 subfamily.

It is found in the nucleus. Its subcellular location is the nucleolus. Polynucleotide 5'-kinase involved in rRNA processing. The sequence is that of Polynucleotide 5'-hydroxyl-kinase NOL9 from Drosophila melanogaster (Fruit fly).